The following is a 167-amino-acid chain: Photosystem II extrinsic protein V (167 aa).

An N-terminal signal peptide occupies residues 1 to 30 (MVFKTLRRTLWLTLAALLAVFQFNLGAAQA). Heme c contacts are provided by Cys-67, Cys-70, His-71, and His-122.

It belongs to the cytochrome c family. PsbV subfamily. In terms of assembly, PSII is composed of 1 copy each of membrane proteins PsbA, PsbB, PsbC, PsbD, PsbE, PsbF, PsbH, PsbI, PsbJ, PsbK, PsbL, PsbM, PsbT, PsbX, PsbY, PsbZ, Psb30/Ycf12, peripheral proteins PsbO, CyanoQ (PsbQ), PsbU, PsbV and a large number of cofactors. It forms dimeric complexes. Heme c serves as cofactor.

It is found in the cellular thylakoid membrane. Functionally, one of the extrinsic, lumenal subunits of photosystem II (PSII). PSII is a light-driven water plastoquinone oxidoreductase, using light energy to abstract electrons from H(2)O, generating a proton gradient subsequently used for ATP formation. The extrinsic proteins stabilize the structure of photosystem II oxygen-evolving complex (OEC), the ion environment of oxygen evolution and protect the OEC against heat-induced inactivation. Low-potential cytochrome c that plays a role in the OEC of PSII. This is Photosystem II extrinsic protein V from Synechococcus elongatus (strain ATCC 33912 / PCC 7942 / FACHB-805) (Anacystis nidulans R2).